The sequence spans 190 residues: Putative phosphatidylethanolamine-binding protein (190 aa).

The protein belongs to the phosphatidylethanolamine-binding protein family.

The chain is Putative phosphatidylethanolamine-binding protein from Plasmodium falciparum.